The following is an 892-amino-acid chain: Translation initiation factor IF-2 (892 aa).

The disordered stretch occupies residues 66–305 (TRSTLNIPGT…SLQQGFQKPA (240 aa)). Over residues 68-82 (STLNIPGTGGKSKSV) the composition is skewed to polar residues. 2 stretches are compositionally biased toward basic and acidic residues: residues 93–159 (VKRD…KDKV) and 166–216 (DMTK…EENK). The span at 254–269 (GRGRNAKAARPAKKGK) shows a compositional bias: basic residues. The segment covering 270-282 (HAESKADREEARA) has biased composition (basic and acidic residues). One can recognise a tr-type G domain in the interval 391 to 560 (PRAPVVTIMG…LLQAEVLELK (170 aa)). Residues 400–407 (GHVDHGKT) are G1. 400–407 (GHVDHGKT) contributes to the GTP binding site. The G2 stretch occupies residues 425 to 429 (GITQH). A G3 region spans residues 446–449 (DTPG). GTP-binding positions include 446-450 (DTPGH) and 500-503 (NKID). Residues 500 to 503 (NKID) form a G4 region. A G5 region spans residues 536 to 538 (SAK).

Belongs to the TRAFAC class translation factor GTPase superfamily. Classic translation factor GTPase family. IF-2 subfamily.

Its subcellular location is the cytoplasm. Functionally, one of the essential components for the initiation of protein synthesis. Protects formylmethionyl-tRNA from spontaneous hydrolysis and promotes its binding to the 30S ribosomal subunits. Also involved in the hydrolysis of GTP during the formation of the 70S ribosomal complex. The chain is Translation initiation factor IF-2 from Salmonella typhi.